The following is a 348-amino-acid chain: Fructose-1,6-bisphosphatase class 1 2 (348 aa).

The Mg(2+) site is built by glutamate 93, aspartate 117, leucine 119, and aspartate 120. Residues 120–123 (DGSS), asparagine 213, tyrosine 244, and lysine 274 contribute to the substrate site. Residue glutamate 280 coordinates Mg(2+).

Belongs to the FBPase class 1 family. In terms of assembly, homotetramer. Mg(2+) serves as cofactor.

Its subcellular location is the cytoplasm. The enzyme catalyses beta-D-fructose 1,6-bisphosphate + H2O = beta-D-fructose 6-phosphate + phosphate. It functions in the pathway carbohydrate biosynthesis; gluconeogenesis. The chain is Fructose-1,6-bisphosphatase class 1 2 from Christiangramia forsetii (strain DSM 17595 / CGMCC 1.15422 / KT0803) (Gramella forsetii).